The primary structure comprises 369 residues: MTKNLYLGVMSGTSLDGVDLCVMDFAKNPPKLTACGFTPMPEDLRTDLSHLLKSGETSLQKLGEIDHRLGLLYAESIKRFLAEHQLSASDIQAIGCHGQTVWHSPNGNFPFTMQIGDMNLVAAHTGITTIADFRRKDMAVGGQGAPLVPAFHEGIFASPERLTVVLNIGGISNISVLAPQQPTIGYDVSVGNALMDSWIELHQAKRYDKNAEWAKTGTLIPALLDSLLDEPFFKLPAPKSTGRELFNLEWLAKKSANLTAYRPEDVQRTLAEFTVQSVVNELKTLESEKQCLLLACGGGARNPLLMQRFSELLPKWQVATTDEYGLDIDYVEAAAFAWLAYQRVHNLTNNLPSVTGAKEPVSLGVIYPK.

Residue 12–19 (GTSLDGVD) coordinates ATP.

This sequence belongs to the anhydro-N-acetylmuramic acid kinase family.

The enzyme catalyses 1,6-anhydro-N-acetyl-beta-muramate + ATP + H2O = N-acetyl-D-muramate 6-phosphate + ADP + H(+). Its pathway is amino-sugar metabolism; 1,6-anhydro-N-acetylmuramate degradation. It functions in the pathway cell wall biogenesis; peptidoglycan recycling. Catalyzes the specific phosphorylation of 1,6-anhydro-N-acetylmuramic acid (anhMurNAc) with the simultaneous cleavage of the 1,6-anhydro ring, generating MurNAc-6-P. Is required for the utilization of anhMurNAc either imported from the medium or derived from its own cell wall murein, and thus plays a role in cell wall recycling. This chain is Anhydro-N-acetylmuramic acid kinase, found in Actinobacillus pleuropneumoniae serotype 5b (strain L20).